Consider the following 118-residue polypeptide: Small ribosomal subunit protein uS13 (118 aa).

A disordered region spans residues 94–118 (GLPVRGQRTKTNARTRKGPRKPIRK).

The protein belongs to the universal ribosomal protein uS13 family. In terms of assembly, part of the 30S ribosomal subunit. Forms a loose heterodimer with protein S19. Forms two bridges to the 50S subunit in the 70S ribosome.

Its function is as follows. Located at the top of the head of the 30S subunit, it contacts several helices of the 16S rRNA. In the 70S ribosome it contacts the 23S rRNA (bridge B1a) and protein L5 of the 50S subunit (bridge B1b), connecting the 2 subunits; these bridges are implicated in subunit movement. Contacts the tRNAs in the A and P-sites. The sequence is that of Small ribosomal subunit protein uS13 from Marinobacter nauticus (strain ATCC 700491 / DSM 11845 / VT8) (Marinobacter aquaeolei).